The primary structure comprises 346 residues: Holliday junction branch migration complex subunit RuvB (346 aa).

A compositionally biased stretch (polar residues) spans 1-11 (MTEQRTIASSA). The interval 1–20 (MTEQRTIASSATREDEAADA) is disordered. The tract at residues 1-183 (MTEQRTIASS…FGIVQRLEFY (183 aa)) is large ATPase domain (RuvB-L). ATP contacts are provided by residues isoleucine 22, arginine 23, glycine 64, lysine 67, threonine 68, threonine 69, 130 to 132 (EDF), arginine 173, tyrosine 183, and arginine 220. Threonine 68 is a Mg(2+) binding site. Residues 184 to 254 (SPQELTRIVI…VAQAAMQMLK (71 aa)) are small ATPAse domain (RuvB-S). The tract at residues 257–346 (PEGFDELDRR…PAIGEPGDLF (90 aa)) is head domain (RuvB-H). Residues arginine 293, arginine 312, and arginine 317 each contribute to the DNA site.

Belongs to the RuvB family. Homohexamer. Forms an RuvA(8)-RuvB(12)-Holliday junction (HJ) complex. HJ DNA is sandwiched between 2 RuvA tetramers; dsDNA enters through RuvA and exits via RuvB. An RuvB hexamer assembles on each DNA strand where it exits the tetramer. Each RuvB hexamer is contacted by two RuvA subunits (via domain III) on 2 adjacent RuvB subunits; this complex drives branch migration. In the full resolvosome a probable DNA-RuvA(4)-RuvB(12)-RuvC(2) complex forms which resolves the HJ.

The protein localises to the cytoplasm. It carries out the reaction ATP + H2O = ADP + phosphate + H(+). In terms of biological role, the RuvA-RuvB-RuvC complex processes Holliday junction (HJ) DNA during genetic recombination and DNA repair, while the RuvA-RuvB complex plays an important role in the rescue of blocked DNA replication forks via replication fork reversal (RFR). RuvA specifically binds to HJ cruciform DNA, conferring on it an open structure. The RuvB hexamer acts as an ATP-dependent pump, pulling dsDNA into and through the RuvAB complex. RuvB forms 2 homohexamers on either side of HJ DNA bound by 1 or 2 RuvA tetramers; 4 subunits per hexamer contact DNA at a time. Coordinated motions by a converter formed by DNA-disengaged RuvB subunits stimulates ATP hydrolysis and nucleotide exchange. Immobilization of the converter enables RuvB to convert the ATP-contained energy into a lever motion, pulling 2 nucleotides of DNA out of the RuvA tetramer per ATP hydrolyzed, thus driving DNA branch migration. The RuvB motors rotate together with the DNA substrate, which together with the progressing nucleotide cycle form the mechanistic basis for DNA recombination by continuous HJ branch migration. Branch migration allows RuvC to scan DNA until it finds its consensus sequence, where it cleaves and resolves cruciform DNA. In Xanthomonas campestris pv. campestris (strain B100), this protein is Holliday junction branch migration complex subunit RuvB.